The primary structure comprises 117 residues: Large ribosomal subunit protein uL22 (117 aa).

It belongs to the universal ribosomal protein uL22 family. Part of the 50S ribosomal subunit.

Its function is as follows. This protein binds specifically to 23S rRNA; its binding is stimulated by other ribosomal proteins, e.g. L4, L17, and L20. It is important during the early stages of 50S assembly. It makes multiple contacts with different domains of the 23S rRNA in the assembled 50S subunit and ribosome. In terms of biological role, the globular domain of the protein is located near the polypeptide exit tunnel on the outside of the subunit, while an extended beta-hairpin is found that lines the wall of the exit tunnel in the center of the 70S ribosome. This is Large ribosomal subunit protein uL22 from Lacticaseibacillus casei (strain BL23) (Lactobacillus casei).